The chain runs to 174 residues: MSSRKTAGRRATTKKRAQRATSNVFAMFDQAQIAEFKEAFNMIDQNRDGFVEKEDLHDMLASLGKNPTDDYLDGMMNEAPGPINFTMFLTLFGERLQGTDPEDVIKNAFGCFDEENMGVLPEDRLRELLTTMGDRFTDEDVDEMYREAPIKNGLFDYLEFTRILKHGAKDKDEQ.

T21 is subject to Phosphothreonine. At S22 the chain carries Phosphoserine. EF-hand domains are found at residues 31–66 (AQIA…LGKN) and 100–135 (DPED…MGDR). D44, N46, D48, and D55 together coordinate Ca(2+).

As to quaternary structure, myosin is a hexamer of 2 heavy chains and 4 light chains. Post-translationally, phosphorylation plays a central role in myosin regulation.

Functionally, required for cytokinesis, could regulate contractile ring function. The protein is Myosin regulatory light chain sqh (sqh) of Drosophila melanogaster (Fruit fly).